Reading from the N-terminus, the 1269-residue chain is MHIFKNLTEPTAVTHSLSCNFTGERNLVLVKGSQLLQIFRYKDDIPTKDEAPRLELITEYYLDGTVTGVTRIKTIDNYDLDSLYISVKHAKAVIVAWNASSFTIDTKSLHYYEKGLVESNFFEPECSSVAVSDEANSFYTCLLFQNDRMAFLPIIEKGLDDDEMPESGQVFDPSFIVKASRLDKRIENVMDICFLHEYRETTMGILFQPKRAWVGMKNILKDTVSYAIVSVDVHQKNSTVIGTLNGLPVDAQKVIPLPAPLGGSLIICANTILYIDSSASYTGVMVNNTHRQNSDLIVSRDQSTLDLRLEGAEVCFIQELGNTALLVTEDGQFFSLLFNKDGRRVASLELRPIEPDNFILSQPSSVAAGPDGTIFLGSRAGDSLLVKWYHGEPESQPEETLDDGNESDDDLYGGDTAQTEDTTNRPLKLRLADRMLGMGPMQSLALGKNRGSQGVEFVTTTGVGANSALAILTSALMPYKRKSLYKDMPGGQFWSVPVRFEEEGEVAKSRTYVVSSDSENSYLYYVDAAGVIEDVSLSTKKKKTKKHFVSNVTTIFSSSMLDSALLQVCLETVNIYDAKIGQPHKYSLPQGTTAVEARVLGNYVLVLLSDGQVKILEAVSINKRPFLKAAQVSIEPASESKAIGIYATDSSLTFGAPSKKRTRQGSPAQDSRPVVVVCYADGSLLLQGLNSDDRLILDASDLSGFIKEKDGQLYDAPLELVDIALSPLGDDHILRDYLVLLTPQQLVVYEPYHYNDKLRFRKIFLERTPTINSDRRLTQVPLINGKHTLGVTGETAYILVKTLHTSPRLIEFGETKGAVAFTSWDGKFAYLTQAGEVAECRFDPSFSLETNWPVKHVQLCGETISKVTYHETMDVYVIATHKTVPHVVRDEDDEVIESLTPDIMPATTYQGAIRIVNPYSWTVIDSYEFEMPAEAALCCESVKLSISDRKSQKREVVAVGTSILRGEDLAARGALYLFDVIEIVPEKERPETNRRLKKLVQDRVRGAFTAVCEVSGRLLAVQGQKLLVQALQDDLTLVPVAFLDMQTYVAVAKSLNSMLLLGDATRSVQFVGFSMDPYQMIPFARDLQRVLVTTCDFAIEGENLTFVVADLQKRLHILEYDPDDPQSYSGARLLRRSVFYSGKVIDSSAMVPINEDRFMVIGVCSDGSVTDVVPCPEDAYRRLYAIQTQITDKEAHVCGLHPRAYRYDPILPGTGNSPHRPILDGHTLIRFANLPRNKQNVYANRLGQRYQQLIWKDLELISDLFKKCI.

The interval 393-427 (PESQPEETLDDGNESDDDLYGGDTAQTEDTTNRPL) is disordered. The segment covering 395 to 412 (SQPEETLDDGNESDDDLY) has biased composition (acidic residues). Over residues 416–425 (TAQTEDTTNR) the composition is skewed to polar residues.

It belongs to the CFT1 family.

It is found in the nucleus. Functionally, RNA-binding component of the cleavage and polyadenylation factor (CPF) complex, which plays a key role in polyadenylation-dependent pre-mRNA 3'-end formation and cooperates with cleavage factors including the CFIA complex and NAB4/CFIB. Involved in poly(A) site recognition. May be involved in coupling transcription termination and mRNA 3'-end formation. This chain is Protein CFT1 (CFT1), found in Yarrowia lipolytica (strain CLIB 122 / E 150) (Yeast).